The chain runs to 125 residues: Small ribosomal subunit protein uS13 (125 aa).

The tract at residues 95 to 125 (GLPVNGQRTRTNARTRKGVKKTVANKKKATK) is disordered. Over residues 105 to 125 (TNARTRKGVKKTVANKKKATK) the composition is skewed to basic residues.

This sequence belongs to the universal ribosomal protein uS13 family. As to quaternary structure, part of the 30S ribosomal subunit. Forms a loose heterodimer with protein S19. Forms two bridges to the 50S subunit in the 70S ribosome.

Located at the top of the head of the 30S subunit, it contacts several helices of the 16S rRNA. In the 70S ribosome it contacts the 23S rRNA (bridge B1a) and protein L5 of the 50S subunit (bridge B1b), connecting the 2 subunits; these bridges are implicated in subunit movement. Contacts the tRNAs in the A and P-sites. This chain is Small ribosomal subunit protein uS13, found in Leptospira biflexa serovar Patoc (strain Patoc 1 / Ames).